We begin with the raw amino-acid sequence, 400 residues long: MPSFKTLDDLSDIRGKRVLVRVDLNVPVKDGKVTDTTRIERVAPTILELSEKGAKVILLAHFGRPKDGPSPELSLSLIAPSVEEVLDHAVSTASDCIGEAAASAVAAMNDGDILLLENTRFHKGEEKNDPDFTKALAANGDIYVNDAFSAAHRAHASTEGLAHHLPAYAGRTMQAELEALEKGLGDPARPVVAIVGGAKVSTKIDLLMNLVKKVDALVIGGGMANTFIAARGTNVGKSLCEHDLAETARQIMIEAATSGCAIILPEDGVIAREFKAGAANETVDIDAIPADAMVLDVGPKSVQAISAWIERASTLVWNGPLGAFEIEPFDAATVGAAKYAAERTTAGKLTSVAGGGDTVSALNHAGVADDFTYVSTAGGAFLEWMEGKELPGVAVLNAAR.

Residues 23 to 25, Arg-38, 61 to 64, Arg-120, and Arg-153 each bind substrate; these read DLN and HFGR. ATP is bound by residues Lys-203, Glu-325, and 355–358; that span reads GGDT.

It belongs to the phosphoglycerate kinase family. As to quaternary structure, monomer.

It localises to the cytoplasm. It carries out the reaction (2R)-3-phosphoglycerate + ATP = (2R)-3-phospho-glyceroyl phosphate + ADP. The protein operates within carbohydrate degradation; glycolysis; pyruvate from D-glyceraldehyde 3-phosphate: step 2/5. This is Phosphoglycerate kinase from Rhizobium leguminosarum bv. trifolii (strain WSM2304).